Consider the following 216-residue polypeptide: MOB kinase activator-like 2A (216 aa).

Zn(2+) contacts are provided by Cys-81, Cys-86, His-162, and His-167.

This sequence belongs to the MOB1/phocein family.

It is found in the nucleus. The chain is MOB kinase activator-like 2A from Arabidopsis thaliana (Mouse-ear cress).